The chain runs to 411 residues: UPF0761 membrane protein PA0951 (411 aa).

6 helical membrane passes run 36-56 (LFAVVPMMTVMFSMLSLIPAF), 92-112 (HLTWVGVVFLAVTAFTMLVTI), 132-152 (FLLYWAILSLGPLLLGAGFAV), 174-194 (LLGLMPLAFSVAAFTLLYSAV), 207-229 (GGVFTAVLFEAAKTLFGLYVSLF), and 244-264 (IFLLWIYLSWMIVLFGAVLVC).

Belongs to the UPF0761 family.

It is found in the cell inner membrane. This is UPF0761 membrane protein PA0951 from Pseudomonas aeruginosa (strain ATCC 15692 / DSM 22644 / CIP 104116 / JCM 14847 / LMG 12228 / 1C / PRS 101 / PAO1).